The chain runs to 143 residues: Cell division protein SepF (143 aa).

Belongs to the SepF family. As to quaternary structure, homodimer. Interacts with FtsZ.

It is found in the cytoplasm. In terms of biological role, cell division protein that is part of the divisome complex and is recruited early to the Z-ring. Probably stimulates Z-ring formation, perhaps through the cross-linking of FtsZ protofilaments. Its function overlaps with FtsA. The polypeptide is Cell division protein SepF (Geobacillus thermodenitrificans (strain NG80-2)).